We begin with the raw amino-acid sequence, 340 residues long: Ketol-acid reductoisomerase (NADP(+)) (340 aa).

Positions 1 to 182 (MRVYYDRDCD…GGGRSGIIET (182 aa)) constitute a KARI N-terminal Rossmann domain. NADP(+)-binding positions include 24–27 (YGSQ), R48, S51, S53, and 83–86 (DELQ). Residue H108 is part of the active site. An NADP(+)-binding site is contributed by G134. A KARI C-terminal knotted domain is found at 183-329 (NFREECETDL…AKLREMMPWI (147 aa)). The Mg(2+) site is built by D191, E195, E227, and E231. S252 lines the substrate pocket.

It belongs to the ketol-acid reductoisomerase family. It depends on Mg(2+) as a cofactor.

The catalysed reaction is (2R)-2,3-dihydroxy-3-methylbutanoate + NADP(+) = (2S)-2-acetolactate + NADPH + H(+). The enzyme catalyses (2R,3R)-2,3-dihydroxy-3-methylpentanoate + NADP(+) = (S)-2-ethyl-2-hydroxy-3-oxobutanoate + NADPH + H(+). The protein operates within amino-acid biosynthesis; L-isoleucine biosynthesis; L-isoleucine from 2-oxobutanoate: step 2/4. It functions in the pathway amino-acid biosynthesis; L-valine biosynthesis; L-valine from pyruvate: step 2/4. Functionally, involved in the biosynthesis of branched-chain amino acids (BCAA). Catalyzes an alkyl-migration followed by a ketol-acid reduction of (S)-2-acetolactate (S2AL) to yield (R)-2,3-dihydroxy-isovalerate. In the isomerase reaction, S2AL is rearranged via a Mg-dependent methyl migration to produce 3-hydroxy-3-methyl-2-ketobutyrate (HMKB). In the reductase reaction, this 2-ketoacid undergoes a metal-dependent reduction by NADPH to yield (R)-2,3-dihydroxy-isovalerate. The chain is Ketol-acid reductoisomerase (NADP(+)) from Ruegeria sp. (strain TM1040) (Silicibacter sp.).